The chain runs to 87 residues: Spermatid-specific protein S1 (87 aa).

The disordered stretch occupies residues 1–36 (TKSRYRNRRSRPRRRYGRRMRKTRCRRKGRRISRRP).

The protein resides in the nucleus. Its subcellular location is the chromosome. Functionally, involved in nuclear basic protein transition: histones are replaced by spermatid specific proteins which are themselves replaced by protamines in late spermatids. The chain is Spermatid-specific protein S1 from Scyliorhinus canicula (Small-spotted catshark).